The following is a 454-amino-acid chain: F-box/WD repeat-containing protein 2 (454 aa).

Residues 54-101 enclose the F-box domain; it reads RDFLKLLPLELSFYLLKWLDPQTLLTCCLVSKQWNKVISACTEVWQTA. WD repeat units follow at residues 139 to 175, 179 to 213, 217 to 255, 259 to 306, 313 to 352, 364 to 403, and 410 to 452; these read FETS…LWDV, QCVY…CWEW, ARTQ…VWAL, TCLN…IWPI, KCLK…QWDF, PEIA…RWPL, and KRGS…LWKE. Position 298 is an N6-acetyllysine (Lys298).

Directly interacts with SKP1 and CUL1.

Its function is as follows. Substrate-recognition component of the SCF (SKP1-CUL1-F-box protein)-type E3 ubiquitin ligase complex. The sequence is that of F-box/WD repeat-containing protein 2 (FBXW2) from Homo sapiens (Human).